Here is a 209-residue protein sequence, read N- to C-terminus: Ribosomal RNA large subunit methyltransferase E (209 aa).

S-adenosyl-L-methionine contacts are provided by Gly-63, Trp-65, Asp-83, Asp-99, and Asp-124. The Proton acceptor role is filled by Lys-164. Residues 191–209 (EASRGRSREVYIVAMGYMG) form the TRAM domain.

It belongs to the class I-like SAM-binding methyltransferase superfamily. RNA methyltransferase RlmE family.

It localises to the cytoplasm. The enzyme catalyses uridine(2552) in 23S rRNA + S-adenosyl-L-methionine = 2'-O-methyluridine(2552) in 23S rRNA + S-adenosyl-L-homocysteine + H(+). Functionally, specifically methylates the uridine in position 2552 of 23S rRNA at the 2'-O position of the ribose in the fully assembled 50S ribosomal subunit. This is Ribosomal RNA large subunit methyltransferase E from Histophilus somni (strain 129Pt) (Haemophilus somnus).